We begin with the raw amino-acid sequence, 453 residues long: Formimidoylglutamate deiminase (453 aa).

Residues histidine 56 and histidine 58 each contribute to the Zn(2+) site. Positions 61, 82, 121, 206, and 209 each coordinate N-formimidoyl-L-glutamate. Histidine 232 lines the Zn(2+) pocket. Glutamate 235 serves as a coordination point for N-formimidoyl-L-glutamate. Active-site proton acceptor residues include histidine 269 and aspartate 320. A Zn(2+)-binding site is contributed by aspartate 320.

It belongs to the metallo-dependent hydrolases superfamily. Homodimer. Zn(2+) serves as cofactor.

The catalysed reaction is N-formimidoyl-L-glutamate + H2O = N-formyl-L-glutamate + NH4(+). It functions in the pathway amino-acid degradation; L-histidine degradation into L-glutamate; L-glutamate from N-formimidoyl-L-glutamate (deiminase route): step 1/2. Inhibited by the metal chelator dipicolinate. Inhibited by N-formimino-L-aspartate and N-guanidino-L-glutaric acid. Its function is as follows. Catalyzes the hydrolysis of N-formimino-L-glutamate to N-formyl-L-glutamate and ammonia. The sequence is that of Formimidoylglutamate deiminase from Pseudomonas aeruginosa (strain ATCC 15692 / DSM 22644 / CIP 104116 / JCM 14847 / LMG 12228 / 1C / PRS 101 / PAO1).